The primary structure comprises 43 residues: uncharacterized protein (43 aa).

This is an uncharacterized protein from Schizosaccharomyces pombe (strain 972 / ATCC 24843) (Fission yeast).